The sequence spans 351 residues: Anthranilate phosphoribosyltransferase (351 aa).

5-phospho-alpha-D-ribose 1-diphosphate is bound by residues Gly80, 83–84, Thr88, 90–93, 108–116, and Ser120; these read GD, NIST, and KHGNRSITS. Residue Gly80 participates in anthranilate binding. Ser92 provides a ligand contact to Mg(2+). Asn111 is a binding site for anthranilate. An anthranilate-binding site is contributed by Arg166. 2 residues coordinate Mg(2+): Asp229 and Glu230.

It belongs to the anthranilate phosphoribosyltransferase family. Homodimer. Mg(2+) is required as a cofactor.

It catalyses the reaction N-(5-phospho-beta-D-ribosyl)anthranilate + diphosphate = 5-phospho-alpha-D-ribose 1-diphosphate + anthranilate. Its pathway is amino-acid biosynthesis; L-tryptophan biosynthesis; L-tryptophan from chorismate: step 2/5. Its function is as follows. Catalyzes the transfer of the phosphoribosyl group of 5-phosphorylribose-1-pyrophosphate (PRPP) to anthranilate to yield N-(5'-phosphoribosyl)-anthranilate (PRA). This is Anthranilate phosphoribosyltransferase from Chlorobaculum parvum (strain DSM 263 / NCIMB 8327) (Chlorobium vibrioforme subsp. thiosulfatophilum).